The sequence spans 588 residues: NADP-dependent malic enzyme 2 (588 aa).

Positions 1-21 (MGSTPTDLPGEDVADNRSGVG) are disordered. Position 2 is an N-acetylglycine (Gly2). The Proton donor role is filled by Tyr136. Arg189 contacts NADP(+). Lys207 (proton acceptor) is an active-site residue. Residues Glu279, Asp280, and Asp303 each coordinate a divalent metal cation. Residues Asp303, 332 to 348 (LFLG…ELIA), and Asn444 each bind NADP(+).

It belongs to the malic enzymes family. Homohexamers and homooctamers. Mg(2+) serves as cofactor. Requires Mn(2+) as cofactor. Expressed in leaves, stems, flowers and roots. Particularly present in vasculatures, trichome basal cells and hydatodes.

The protein resides in the cytoplasm. It carries out the reaction (S)-malate + NADP(+) = pyruvate + CO2 + NADPH. It catalyses the reaction oxaloacetate + H(+) = pyruvate + CO2. Activated by coenzyme A (CoA), aspartate, succinate and fumarate. Repressed by oxaloacetate, glucose and ATP. The polypeptide is NADP-dependent malic enzyme 2 (NADP-ME2) (Arabidopsis thaliana (Mouse-ear cress)).